The sequence spans 644 residues: MANNDNKHRRSMSMLLYIAVAIFVYLLLSNTLLPGLLRQQIQTVSYSEFLNKIESNEVTKVDLNTGNRNIRFTTGSGDSEKIFETTQFPNDSTLVQTLREHKVDFSASIPDNSANMLMYALIQYGIPLIIFLGIGFFINRSLKRAMGDDGPSMNFGGGFGGLGGNLGRSSAKEIKGEDTGITFKDVAGQEEAKESMQEIVSFLKTPDKYKEIGARCPRGALLVGPPGTGKTLIAKAVAGEAGVPFFQIAGSEFVEMFVGRGAAKVRDLFKQANEKAPCIIFIDEIDAVGKRRDASLNSNDEREQTLNQLLSEMDGFDNHKGIVVLAATNRPETLDKALLRPGRFDRRIPVELPDLKGREAVLQIHANDVKMEPGVDLSIVAKSTPGASGADLANIINEAALRAVRFGRRRVTTEDLTESVDVVIAGAKKKNSVLSEHEKDVVAYHETGHAIVGAIQKNDAPVTKITIVPRTSGALGFTMQVEDDERYLMSKSQAMDEIAVLCGGRAAEELIFGEMTNGASNDIERATAIARAMVTQYGMSDKLGMVTLSQQQSRYLGGGSSLTCSEATAEEIDAEVRRIVEEGHQRALQTLKENRFKLHEIAHYLQKKETITGEEFMNILKRENTFAPVDKNINDEGSSTPSEE.

Residues M1–S13 are Cytoplasmic-facing. The chain crosses the membrane as a helical span at residues M14–P34. Topologically, residues G35–L117 are extracellular. Residues M118–I138 form a helical membrane-spanning segment. Over N139–E644 the chain is Cytoplasmic. An ATP-binding site is contributed by G224–T231. Zn(2+) is bound at residue H445. E446 is a catalytic residue. Zn(2+) contacts are provided by H449 and D522.

It in the central section; belongs to the AAA ATPase family. In the C-terminal section; belongs to the peptidase M41 family. As to quaternary structure, homohexamer. It depends on Zn(2+) as a cofactor.

The protein localises to the cell membrane. Acts as a processive, ATP-dependent zinc metallopeptidase for both cytoplasmic and membrane proteins. Plays a role in the quality control of integral membrane proteins. The polypeptide is ATP-dependent zinc metalloprotease FtsH (Lancefieldella parvula (strain ATCC 33793 / DSM 20469 / CCUG 32760 / JCM 10300 / KCTC 3663 / VPI 0546 / 1246) (Atopobium parvulum)).